A 320-amino-acid chain; its full sequence is MVRKKIALIGSGMIGGTLAHIIGLKELGDVVLFDISEGMPQGKALDIAESSPIDGFDVHLKGANAYEAIEGADVVIVTAGVARKPGMSRDDLLGINLKVMEQVGAGIKKYAPSAFVICITNPLDAMVWALQKFSGLPVHKVVGMAGILDSARFRYFLSEEFKVSVKDVTAFVLGGHGDSMVPLVRYSTVGGISLPDLVKMGWTTQERIDQIIQRTRDGGAEVISLLKTGSAYYAPAASAVSMAEAYLKGTKRVVPVAAYLSGEYGVNDTYVGVPVVLGSGGVERVIEIDLDKEERDAFDYSVNAVKKLCEACIALVPSLK.

NAD(+) contacts are provided by residues 10 to 15 (GSGMIG) and Asp-34. Substrate contacts are provided by Arg-83 and Arg-89. Residues Asn-96 and 119–121 (ITN) each bind NAD(+). 2 residues coordinate substrate: Asn-121 and Arg-152. The active-site Proton acceptor is the His-176.

It belongs to the LDH/MDH superfamily. MDH type 3 family.

The enzyme catalyses (S)-malate + NAD(+) = oxaloacetate + NADH + H(+). Catalyzes the reversible oxidation of malate to oxaloacetate. This chain is Malate dehydrogenase, found in Bartonella tribocorum (strain CIP 105476 / IBS 506).